Reading from the N-terminus, the 1017-residue chain is Ubiquitin-like modifier-activating enzyme 1 (1017 aa).

2 repeat units span residues 26–163 (SHET…GQLF) and 419–571 (GKTL…QVVV). The 2 approximate repeats stretch occupies residues 26-571 (SHETMKKITS…GTKGNTQVVV (546 aa)). ATP contacts are provided by residues Ala438, Asp464, Arg475, Lys488, and 536–537 (DN). Cys592 acts as the Glycyl thioester intermediate in catalysis. The segment covering 765 to 781 (IQTSENEPAPSSNTQQA) has biased composition (polar residues). The disordered stretch occupies residues 765–788 (IQTSENEPAPSSNTQQAGGDAEDD).

The protein belongs to the ubiquitin-activating E1 family. In terms of assembly, monomer.

The enzyme catalyses ATP + ubiquitin + [E1 ubiquitin-activating enzyme]-L-cysteine = AMP + diphosphate + S-ubiquitinyl-[E1 ubiquitin-activating enzyme]-L-cysteine.. It functions in the pathway protein modification; protein ubiquitination. Its function is as follows. Catalyzes the first step in ubiquitin conjugation to mark cellular proteins for degradation through the ubiquitin-proteasome system. Activates ubiquitin by first adenylating its C-terminal glycine residue with ATP, and thereafter linking this residue to the side chain of a cysteine residue in E1, yielding a ubiquitin-E1 thioester and free AMP. The sequence is that of Ubiquitin-like modifier-activating enzyme 1 (uba1) from Dictyostelium discoideum (Social amoeba).